The sequence spans 1430 residues: 3'-5' RNA helicase YTHDC2 (1430 aa).

Residues M1–K37 form a disordered region. The segment covering P14–A33 has biased composition (gly residues). An R3H domain is found at D38–D106. Residues V203–Q369 form the Helicase ATP-binding domain. G216–T223 provides a ligand contact to ATP. Residues D316–H319 carry the DEAH box motif. ANK repeat units lie at residues T506–S538 and N539–L571. Residues L612–A784 form the Helicase C-terminal domain. Phosphoserine occurs at positions 1089, 1090, and 1092. Residues E1164–G1174 are compositionally biased toward polar residues. The tract at residues E1164 to V1288 is disordered. The segment covering S1191–K1200 has biased composition (low complexity). S1202 is modified (phosphoserine). Residues K1231–D1249 show a composition bias toward basic and acidic residues. Residues Q1250–P1264 are compositionally biased toward low complexity. Residues S1263, S1267, and S1281 each carry the phosphoserine modification. Residues V1288–W1418 form the YTH domain. RNA-binding positions include K1294–S1296, W1310, and W1360.

It belongs to the DEAD box helicase family. DEAH subfamily. Interacts with MEIOC; binds transcripts that regulate the mitotic cell cycle inhibiting progression into metaphase, thereby allowing meiotic prophase to proceed normally. Interacts (via ANK repeats) with XRN1. Interacts with ZCCHC4. Associates with the small ribosomal subunit. Interacts with RBM46.

It localises to the cytoplasm. It is found in the perinuclear region. It catalyses the reaction ATP + H2O = ADP + phosphate + H(+). Its function is as follows. 3'-5' RNA helicase that plays a key role in the male and female germline by promoting transition from mitotic to meiotic divisions in stem cells. Specifically recognizes and binds N6-methyladenosine (m6A)-containing RNAs, a modification present at internal sites of mRNAs and some non-coding RNAs that plays a role in the efficiency of RNA processing and stability. Essential for ensuring a successful progression of the meiotic program in the germline by regulating the level of m6A-containing RNAs. Acts by binding and promoting degradation of m6A-containing mRNAs: the 3'-5' RNA helicase activity is required for this process and RNA degradation may be mediated by XRN1 exoribonuclease. Required for both spermatogenesis and oogenesis. This is 3'-5' RNA helicase YTHDC2 from Pongo abelii (Sumatran orangutan).